A 535-amino-acid polypeptide reads, in one-letter code: Dimethylaniline monooxygenase [N-oxide-forming] 2 (535 aa).

Ala2 carries the N-acetylalanine modification. FAD-binding positions include 9–13 (GAGVS), Glu32, 40–41 (LW), and 61–62 (NT). NADP(+) is bound by residues 60-61 (TN) and 195-198 (SAAD). Lys492 is covalently cross-linked (Glycyl lysine isopeptide (Lys-Gly) (interchain with G-Cter in SUMO)). A helical membrane pass occupies residues 510–530 (APVSFLLKILGLLAVVLAFFF).

Belongs to the FMO family. It depends on FAD as a cofactor. Mg(2+) serves as cofactor.

It localises to the microsome membrane. The protein localises to the endoplasmic reticulum membrane. Catalyzes the oxidative metabolism of numerous xenobiotics, including mainly therapeutic drugs and insecticides that contain a soft nucleophile, most commonly nitrogen and sulfur and participates to their bioactivation. Catalyzes the S-oxygenation of the prodrug ethionamide (ETA) to the S-oxide (ETASO), the first step in its bioactivation following by the second oxygenation to the sulfinic acid but to a lesser extend. This chain is Dimethylaniline monooxygenase [N-oxide-forming] 2, found in Mus musculus (Mouse).